A 158-amino-acid polypeptide reads, in one-letter code: U-limacoditoxin(8)-Dv66 (158 aa).

Positions 1–24 (MALRAPWIALCCVLAVLFVVPAAT) are cleaved as a signal peptide. Residues 25 to 32 (RDEERQKR) constitute a propeptide that is removed on maturation. 2 consecutive repeat copies span residues 33–78 (GVDF…RQKR) and 79–124 (GVDF…RQKR). A 3 X 46 AA tandem repeats region spans residues 33 to 158 (GVDFGLQRGF…AQDPHGPGRK (126 aa)). At proline 63 the chain carries Proline amide. Positions 64-78 (GRKRRDAYEMERQKR) are excised as a propeptide. A disordered region spans residues 101–120 (ARAQDPHGPGRKRRDAYEME). A Proline amide modification is found at proline 109. Residues 110-124 (GRKRRDAYEMERQKR) constitute a propeptide that is removed on maturation. A 3; half-length repeat occupies 125–158 (GVDFGLQRGFSGSELAKLKLALARAQDPHGPGRK). Position 155 is a proline amide (proline 155).

Belongs to the diuretic hormone class 2 family. As to expression, expressed by the venom secretory cell of the spine. The spine is a cuticular structure containing a single large nucleated venom-secreting cell at its base. It is an independent unit capable of producing, storing and injecting venom. On the back of D.vulnerans caterpillars, spines are grouped together by 50 to 100 to form scoli, of which there are eight in D.vulnerans.

It is found in the secreted. Probable toxin. Does not show insecticidal, antimicrobial and antiparasitic activities. Does not induce increase in intracellular calcium in mouse DRG neurons, suggesting that it does not induce pain. This Doratifera vulnerans (Mottled cup moth) protein is U-limacoditoxin(8)-Dv66.